The primary structure comprises 376 residues: Chaperone protein DnaJ (376 aa).

In terms of domain architecture, J spans 5-70 (DYYEILGVSK…QKRAAYDQYG (66 aa)). The CR-type zinc finger occupies 131 to 209 (GVTKEIRIPT…CHGHGRVERS (79 aa)). Zn(2+)-binding residues include Cys144, Cys147, Cys161, Cys164, Cys183, Cys186, Cys197, and Cys200. CXXCXGXG motif repeat units follow at residues 144–151 (CDVCHGSG), 161–168 (CPTCHGSG), 183–190 (CPHCQGRG), and 197–204 (CNKCHGHG).

It belongs to the DnaJ family. In terms of assembly, homodimer. It depends on Zn(2+) as a cofactor.

The protein resides in the cytoplasm. Participates actively in the response to hyperosmotic and heat shock by preventing the aggregation of stress-denatured proteins and by disaggregating proteins, also in an autonomous, DnaK-independent fashion. Unfolded proteins bind initially to DnaJ; upon interaction with the DnaJ-bound protein, DnaK hydrolyzes its bound ATP, resulting in the formation of a stable complex. GrpE releases ADP from DnaK; ATP binding to DnaK triggers the release of the substrate protein, thus completing the reaction cycle. Several rounds of ATP-dependent interactions between DnaJ, DnaK and GrpE are required for fully efficient folding. Also involved, together with DnaK and GrpE, in the DNA replication of plasmids through activation of initiation proteins. This is Chaperone protein DnaJ from Shigella flexneri serotype 5b (strain 8401).